A 376-amino-acid polypeptide reads, in one-letter code: Protein RecA (376 aa).

65 to 72 (GPESSGKT) is an ATP binding site. The tract at residues 316–376 (EHDEIFTSVR…GDDLSDDDIY (61 aa)) is disordered. Positions 331 to 350 (GEKKDSDEDPGDNKKSKDSA) are enriched in basic and acidic residues. Positions 366–376 (PGDDLSDDDIY) are enriched in acidic residues.

This sequence belongs to the RecA family.

It is found in the cytoplasm. Functionally, can catalyze the hydrolysis of ATP in the presence of single-stranded DNA, the ATP-dependent uptake of single-stranded DNA by duplex DNA, and the ATP-dependent hybridization of homologous single-stranded DNAs. It interacts with LexA causing its activation and leading to its autocatalytic cleavage. This chain is Protein RecA, found in Oenococcus oeni (strain ATCC BAA-331 / PSU-1).